A 569-amino-acid polypeptide reads, in one-letter code: Proline--tRNA ligase (569 aa).

It belongs to the class-II aminoacyl-tRNA synthetase family. ProS type 1 subfamily. In terms of assembly, homodimer.

The protein localises to the cytoplasm. The catalysed reaction is tRNA(Pro) + L-proline + ATP = L-prolyl-tRNA(Pro) + AMP + diphosphate. Catalyzes the attachment of proline to tRNA(Pro) in a two-step reaction: proline is first activated by ATP to form Pro-AMP and then transferred to the acceptor end of tRNA(Pro). As ProRS can inadvertently accommodate and process non-cognate amino acids such as alanine and cysteine, to avoid such errors it has two additional distinct editing activities against alanine. One activity is designated as 'pretransfer' editing and involves the tRNA(Pro)-independent hydrolysis of activated Ala-AMP. The other activity is designated 'posttransfer' editing and involves deacylation of mischarged Ala-tRNA(Pro). The misacylated Cys-tRNA(Pro) is not edited by ProRS. The protein is Proline--tRNA ligase of Dehalococcoides mccartyi (strain CBDB1).